The sequence spans 153 residues: Ribonuclease P protein component (153 aa).

Belongs to the RnpA family. In terms of assembly, consists of a catalytic RNA component (M1 or rnpB) and a protein subunit.

It carries out the reaction Endonucleolytic cleavage of RNA, removing 5'-extranucleotides from tRNA precursor.. RNaseP catalyzes the removal of the 5'-leader sequence from pre-tRNA to produce the mature 5'-terminus. It can also cleave other RNA substrates such as 4.5S RNA. The protein component plays an auxiliary but essential role in vivo by binding to the 5'-leader sequence and broadening the substrate specificity of the ribozyme. The chain is Ribonuclease P protein component from Helicobacter acinonychis (strain Sheeba).